The sequence spans 130 residues: Serum amyloid A protein (130 aa).

A signal peptide spans 1 to 18; sequence MKLFTGLILCSLVLGVHS. Q19 carries the pyrrolidone carboxylic acid modification. The disordered stretch occupies residues 86-130; that stretch reads TDPLFKGTTSGQGQEDSRADQAANEWGRSGKDPNHFRPAGLPDKY.

The protein belongs to the SAA family. This protein is the precursor of amyloid protein A, which is formed by the removal of residues from the C-terminal end. As to expression, expressed by the liver; secreted in plasma.

It localises to the secreted. Functionally, major acute phase reactant. Apolipoprotein of the HDL complex. The polypeptide is Serum amyloid A protein (SAA1) (Bos taurus (Bovine)).